The sequence spans 122 residues: Small ribosomal subunit protein uS13 (122 aa).

Residues 95–122 (GLPVRGQRTHTNARTRKGPAKSIAGKKK) form a disordered region.

It belongs to the universal ribosomal protein uS13 family. Part of the 30S ribosomal subunit. Forms a loose heterodimer with protein S19. Forms two bridges to the 50S subunit in the 70S ribosome.

Located at the top of the head of the 30S subunit, it contacts several helices of the 16S rRNA. In the 70S ribosome it contacts the 23S rRNA (bridge B1a) and protein L5 of the 50S subunit (bridge B1b), connecting the 2 subunits; these bridges are implicated in subunit movement. Contacts the tRNAs in the A and P-sites. The polypeptide is Small ribosomal subunit protein uS13 (Rhodopseudomonas palustris (strain BisB18)).